The chain runs to 122 residues: Large ribosomal subunit protein uL14 (122 aa).

The protein belongs to the universal ribosomal protein uL14 family. As to quaternary structure, part of the 50S ribosomal subunit. Forms a cluster with proteins L3 and L19. In the 70S ribosome, L14 and L19 interact and together make contacts with the 16S rRNA in bridges B5 and B8.

Binds to 23S rRNA. Forms part of two intersubunit bridges in the 70S ribosome. The protein is Large ribosomal subunit protein uL14 of Polaromonas naphthalenivorans (strain CJ2).